The sequence spans 437 residues: GTPase Der (437 aa).

EngA-type G domains follow at residues 3–167 and 177–353; these read ALVA…PAEN and PRIA…AHRS. GTP contacts are provided by residues 9-16, 56-60, 119-122, 183-190, 230-234, and 295-298; these read GRPNVGKS, DTGGW, NKVD, GRPNAGKS, DTAGI, and NKWD. Residues 354 to 437 form the KH-like domain; sequence TRIPTHKLNE…TPINIFIREK (84 aa).

It belongs to the TRAFAC class TrmE-Era-EngA-EngB-Septin-like GTPase superfamily. EngA (Der) GTPase family. Associates with the 50S ribosomal subunit.

In terms of biological role, GTPase that plays an essential role in the late steps of ribosome biogenesis. The protein is GTPase Der of Porphyromonas gingivalis (strain ATCC BAA-308 / W83).